The chain runs to 99 residues: Cell division protein FtsB (99 aa).

At 1–3 (MKF) the chain is on the cytoplasmic side. Residues 4–21 (FVIALIVLLGLLQYRLWS) traverse the membrane as a helical segment. Residues 22–99 (GDNSLPEYFV…GDRSVSSPSQ (78 aa)) lie on the Periplasmic side of the membrane. Residues 31–73 (VLQKQIAAQQDGNAKLNERNQVLKEEIIDLKSGTEAIEERARN) adopt a coiled-coil conformation.

Belongs to the FtsB family. As to quaternary structure, part of a complex composed of FtsB, FtsL and FtsQ.

It localises to the cell inner membrane. Functionally, essential cell division protein. May link together the upstream cell division proteins, which are predominantly cytoplasmic, with the downstream cell division proteins, which are predominantly periplasmic. The protein is Cell division protein FtsB of Shewanella sp. (strain MR-4).